The sequence spans 395 residues: ATP phosphoribosyltransferase regulatory subunit (395 aa).

The protein belongs to the class-II aminoacyl-tRNA synthetase family. HisZ subfamily. Heteromultimer composed of HisG and HisZ subunits.

Its subcellular location is the cytoplasm. It participates in amino-acid biosynthesis; L-histidine biosynthesis; L-histidine from 5-phospho-alpha-D-ribose 1-diphosphate: step 1/9. Functionally, required for the first step of histidine biosynthesis. May allow the feedback regulation of ATP phosphoribosyltransferase activity by histidine. The polypeptide is ATP phosphoribosyltransferase regulatory subunit (Pseudomonas savastanoi pv. phaseolicola (strain 1448A / Race 6) (Pseudomonas syringae pv. phaseolicola (strain 1448A / Race 6))).